A 352-amino-acid polypeptide reads, in one-letter code: Selenide, water dikinase (352 aa).

The active site involves Cys-23. Residues Lys-26 and 54-56 (SRD) each bind ATP. Residue Asp-57 coordinates Mg(2+). Residues Asp-74, Asp-97, and 145–147 (GHS) each bind ATP. Position 97 (Asp-97) interacts with Mg(2+). Position 233 (Asp-233) interacts with Mg(2+).

It belongs to the selenophosphate synthase 1 family. Class I subfamily. As to quaternary structure, homodimer. Requires Mg(2+) as cofactor.

It catalyses the reaction hydrogenselenide + ATP + H2O = selenophosphate + AMP + phosphate + 2 H(+). In terms of biological role, synthesizes selenophosphate from selenide and ATP. This chain is Selenide, water dikinase, found in Shewanella baltica (strain OS155 / ATCC BAA-1091).